The chain runs to 324 residues: Archaeosine synthase subunit beta (324 aa).

The region spanning 12–254 (GKPGTALFII…LIWAKRKFPN (243 aa)) is the Radical SAM core domain. Residues cysteine 27, cysteine 36, and cysteine 39 each coordinate [4Fe-4S] cluster.

The protein belongs to the radical SAM superfamily. RaSEA family. Forms a robust complex with the archaeosine synthase alpha subunit ArcS, likely an alpha(2)beta(2) heterotetrameric structure. The cofactor is [4Fe-4S] cluster.

It carries out the reaction 7-N-[(5S)-5-amino-5-carboxypentyl]formamidino-7-deazaguanosine(15) in tRNA + S-adenosyl-L-methionine = archaeosine(15) in tRNA + L-1-piperideine-6-carboxylate + 5'-deoxyadenosine + L-methionine + 2 H(+). Its pathway is tRNA modification; archaeosine-tRNA biosynthesis. Radical SAM enzyme involved in the synthesis of archaeosine, a modified nucleoside present in the dihydrouridine loop (D-loop) of archaeal tRNAs. Catalyzes the cleavage of the C(epsilon)-N bond of the lysine moiety of q0kN15-tRNA, leading to the formation of archaeosine at position 15 in tRNAs. The chain is Archaeosine synthase subunit beta from Thermococcus kodakarensis (strain ATCC BAA-918 / JCM 12380 / KOD1) (Pyrococcus kodakaraensis (strain KOD1)).